A 639-amino-acid polypeptide reads, in one-letter code: AP2-like ethylene-responsive transcription factor CRL5 (639 aa).

Disordered stretches follow at residues 25–59 (PHMA…QQQH) and 258–277 (GRKR…HHRK). Over residues 43 to 59 (QQQQQQQQQQHHQQQQH) the composition is skewed to low complexity. 2 consecutive DNA-binding regions (AP2/ERF) follow at residues 288–351 (QYRG…INFP) and 387–445 (MYRG…TNFD). Residues 547–561 (QQQQQHMSMSAASSL) show a composition bias toward low complexity. The interval 547–579 (QQQQQHMSMSAASSLVTSLSNSREGSPDRGGGL) is disordered.

It belongs to the AP2/ERF transcription factor family. AP2 subfamily. Highly expressed at the base of the stem. Expressed in stems. Expressed a low levels in crown roots and seeds. Expressed in the stem region where adventitious (crown) root initiation occurs.

It is found in the nucleus. In terms of biological role, acts as a positive regulator of adventitious (crown) root formation by promoting its initiation. Promotes adventitious root initiation through repression of cytokinin signaling by positively regulating the two-component response regulator RR1. Regulated by the auxin response factor and transcriptional activator ARF23/ARF1. This Oryza sativa subsp. japonica (Rice) protein is AP2-like ethylene-responsive transcription factor CRL5.